The following is an 86-amino-acid chain: RNA-binding protein Hfq (86 aa).

The Sm domain maps to 9–68 (DPFLNALRRERIPVSIYLVNGIKLQGQIESFDQFVILLKNTVNQMVYKHAISTVVPARPV). Positions 65–86 (ARPVSHHSGERGSDRPSEKSED) are disordered. Residues 71 to 86 (HSGERGSDRPSEKSED) are compositionally biased toward basic and acidic residues.

Belongs to the Hfq family. In terms of assembly, homohexamer.

In terms of biological role, RNA chaperone that binds small regulatory RNA (sRNAs) and mRNAs to facilitate mRNA translational regulation in response to envelope stress, environmental stress and changes in metabolite concentrations. Also binds with high specificity to tRNAs. In Vibrio vulnificus (strain YJ016), this protein is RNA-binding protein Hfq.